The primary structure comprises 60 residues: Large ribosomal subunit protein uL30 (60 aa).

Belongs to the universal ribosomal protein uL30 family. In terms of assembly, part of the 50S ribosomal subunit.

This Mycobacteroides abscessus (strain ATCC 19977 / DSM 44196 / CCUG 20993 / CIP 104536 / JCM 13569 / NCTC 13031 / TMC 1543 / L948) (Mycobacterium abscessus) protein is Large ribosomal subunit protein uL30.